A 128-amino-acid chain; its full sequence is Large ribosomal subunit protein bL17 (128 aa).

It belongs to the bacterial ribosomal protein bL17 family. As to quaternary structure, part of the 50S ribosomal subunit. Contacts protein L32.

The polypeptide is Large ribosomal subunit protein bL17 (Streptococcus suis (strain 98HAH33)).